The sequence spans 420 residues: O-methyltransferase penK (420 aa).

D285 lines the S-adenosyl-L-methionine pocket. H325 (proton acceptor) is an active-site residue.

This sequence belongs to the class I-like SAM-binding methyltransferase superfamily. Cation-independent O-methyltransferase family.

The protein operates within secondary metabolite biosynthesis. Its pathway is alkaloid biosynthesis. It functions in the pathway mycotoxin biosynthesis. In terms of biological role, O-methyltransferase; part of the gene cluster that mediates the biosynthesis of penigequinolones, potent insecticidal alkaloids that contain a highly modified 10-carbon prenyl group. The first stage is catalyzed by the nonribosomal peptide synthetase penN that condenses anthranilic acid and O-methyl-L-tyrosine to produce 4'-methoxycyclopeptin. 4'-methoxycyclopeptin is then converted to 4'-methoxydehydrocyclopeptin by the ketoglutarate-dependent dioxygenase penM through dehydrogenation to form a double bond between C-alpha and C-beta of the O-methyltyrosine side chain. PenM also converts its first product methoxydehydrocyclopeptin to 4'-methoxycyclopenin. The following conversion of 4'methoxycyclopenin into 4'-methoxyviridicatin is catalyzed by the cyclopenase penL. 4'-methoxyviridicatin is the precursor of quinolone natural products, and is further converted to quinolinone B. The prenyltransferase penI then catalyzes the canonical Friedel-Crafts alkylation of quinolinone B with dimethylallyl cation to yield dimethylallyl quinolone, which is subjected to FAD-dependent dehydrogenation by the FAD-linked oxidoreductase penH to yield conjugated aryl diene. The delta(3') double bond then serves as the site of the second alkylation with DMAPP catalyzed by the prenyltransferase penG to yield a carbenium ion intermediate, which can be attacked by H(2)O to yield a styrenyl quinolone containing a C3'-hydroxyprenyl chain, or undergo cyclization to yield yaequinolones J1 and J2. The conversion of the styrenyl quinolone into the tetrahydrofuran-containing yaequinolone C is performed by the FAD-dependent monooxygenase penE and involves epoxidation of the terminal C7'-C8' olefin, followed by epoxide ring opening initiated by the C3' hydroxyl group. The predicted cysteine hydrolase penJ acts as an epoxide hydrolase that enhances the rate of the 5-exo-tet cyclization step, increasing the yield of yaequinolone C. PenF catalyzes the cationic rearrangement of the epoxide formed by penE (before ring opening to produce yaequinolone C) into yaequinolone D. Finally, the short-chain dehydrogenase/reductase (SDR)-like reductase penD, catalyzes both the dehydration of yaequinolone D and the reduction of the resulting oxonium to yield penigequinolone. The chain is O-methyltransferase penK from Penicillium thymicola.